The sequence spans 434 residues: CCA tRNA nucleotidyltransferase 1, mitochondrial (434 aa).

Residues 1–41 constitute a mitochondrion transit peptide; it reads MLRCLYHWHRPVLNRRWSRLCLPKQYLFTMKLQSPEFQSLF. ATP contacts are provided by Gly64 and Arg67. Gly64 and Arg67 together coordinate CTP. Residues Asp77 and Asp79 each contribute to the Mg(2+) site. Positions 151, 194, 197, 200, and 203 each coordinate ATP. Positions 151, 194, 197, 200, and 203 each coordinate CTP. Ser400 is subject to Phosphoserine. Lys402 carries the post-translational modification N6-acetyllysine.

Belongs to the tRNA nucleotidyltransferase/poly(A) polymerase family. In terms of assembly, monomer, and homodimer; disulfide-linked. Requires Mg(2+) as cofactor.

The protein localises to the mitochondrion. It localises to the cytoplasm. Its subcellular location is the nucleus. The enzyme catalyses a tRNA precursor + 2 CTP + ATP = a tRNA with a 3' CCA end + 3 diphosphate. It carries out the reaction a tRNA with a 3' CCA end + 2 CTP + ATP = a tRNA with a 3' CCACCA end + 3 diphosphate. Nucleotidyltransferase that catalyzes the addition and repair of the essential 3'-terminal CCA sequence in tRNAs, which is necessary for the attachment of amino acids to the 3' terminus of tRNA molecules, using CTP and ATP as substrates. tRNA 3'-terminal CCA addition is required both for tRNA processing and repair. Promotes tRNA repair and recycling downstream of the ribosome-associated quality control (RQC) pathway by mediating addition of the tRNA 3'-terminal CCA following cleavage by ANKZF1 and repair by ELAC1. Also involved in tRNA surveillance by mediating tandem CCA addition to generate a CCACCA at the 3' terminus of unstable tRNAs and tRNA-like transcripts. While stable tRNAs receive only 3'-terminal CCA, unstable tRNAs beginning with GG are marked with CCACCA and rapidly degraded. The structural flexibility of RNA controls the choice between CCA versus CCACCA addition: following the first CCA addition cycle, nucleotide-binding to the active site triggers a clockwise screw motion, producing torque on the RNA. This ejects stable RNAs, whereas unstable RNAs are refolded while bound to the enzyme and subjected to a second CCA catalytic cycle. Functionally, adds 2 C residues (CC-) to the 3' terminus of tRNA molecules instead of a complete CCA end as isoform 1 does (in vitro). In Homo sapiens (Human), this protein is CCA tRNA nucleotidyltransferase 1, mitochondrial.